Reading from the N-terminus, the 301-residue chain is Glutamyl-Q tRNA(Asp) synthetase (301 aa).

L-glutamate-binding positions include 8-12 and glutamate 44; that span reads RFAPS. Positions 11 to 21 match the 'HIGH' region motif; it reads PSPTGPLHFGS. Positions 100, 102, 122, and 126 each coordinate Zn(2+). L-glutamate-binding residues include tyrosine 180 and arginine 198. Residues 236–240 carry the 'KMSKS' region motif; that stretch reads KLSKQ. Lysine 239 serves as a coordination point for ATP.

The protein belongs to the class-I aminoacyl-tRNA synthetase family. GluQ subfamily. Zn(2+) is required as a cofactor.

In terms of biological role, catalyzes the tRNA-independent activation of glutamate in presence of ATP and the subsequent transfer of glutamate onto a tRNA(Asp). Glutamate is transferred on the 2-amino-5-(4,5-dihydroxy-2-cyclopenten-1-yl) moiety of the queuosine in the wobble position of the QUC anticodon. The polypeptide is Glutamyl-Q tRNA(Asp) synthetase (Dechloromonas aromatica (strain RCB)).